The chain runs to 178 residues: Caveolin-1 (178 aa).

An N-acetylserine modification is found at Ser-2. Ser-2 bears the Phosphoserine mark. A required for homooligomerization region spans residues 2-94 (SGGKYVDSEG…WKASFTTFTV (93 aa)). Residues 2-104 (SGGKYVDSEG…TKYWFYRLLS (103 aa)) are Cytoplasmic-facing. At Lys-5 the chain carries N6-acetyllysine; alternate. Residue Lys-5 forms a Glycyl lysine isopeptide (Lys-Gly) (interchain with G-Cter in ubiquitin); alternate linkage. Tyr-6 carries the post-translational modification Phosphotyrosine. Residue Ser-9 is modified to Phosphoserine. Residue Tyr-14 is modified to Phosphotyrosine; by ABL1. Tyr-25 is subject to Phosphotyrosine. Residues Lys-26, Lys-30, Lys-39, Lys-47, and Lys-57 each participate in a glycyl lysine isopeptide (Lys-Gly) (interchain with G-Cter in ubiquitin) cross-link. Residues 82–94 (DGIWKASFTTFTV) are interaction with CAVIN3. Positions 105-125 (ALFGIPMALIWGIYFAILSFL) form an intramembrane region, helical. Residues 126–178 (HIWAVVPCIKSFLIEIQCISRVYSIYVHTFCDPLFEAIGKIFSNVRINLQKEI) lie on the Cytoplasmic side of the membrane. Residues 131–142 (VPCIKSFLIEIQ) form an interacts with SPRY1, SPRY2, SPRY3 and SPRY4 region. S-palmitoyl cysteine attachment occurs at residues Cys-133, Cys-143, and Cys-156. The segment at 149–160 (SIYVHTFCDPLF) is interacts with SPRY1, SPRY2, and SPRY4. Residues 167 to 178 (FSNVRINLQKEI) form an interacts with SPRY1, SPRY2, SPRY3 and SPRY4 region.

The protein belongs to the caveolin family. Homooligomer. Interacts with GLIPR2. Interacts with NOSTRIN. Interacts with SNAP25 and STX1A. Interacts (via the N-terminus) with DPP4; the interaction is direct. Interacts with CTNNB1, CDH1 and JUP. Interacts with PACSIN2; this interaction induces membrane tubulation. Interacts with SLC7A9. Interacts with BMX and BTK. Interacts with TGFBR1. Interacts with CAVIN3 (via leucine-zipper domain) in a cholesterol-sensitive manner. Interacts with CAVIN1. Interacts with EHD2 in a cholesterol-dependent manner. Forms a ternary complex with UBXN6 and VCP; mediates CAV1 targeting to lysosomes for degradation. Interacts with ABCG1; this interaction regulates ABCG1-mediated cholesterol efflux. Interacts with NEU3; this interaction enhances NEU3 sialidase activity within caveola. Interacts (via C-terminus) with SPRY1, SPRY2 (via C-terminus), SPRY3, and SPRY4. Interacts with IGFBP5; this interaction allows trafficking of IGFBP5 from the plasma membrane to the nucleus. In terms of processing, phosphorylated at Tyr-14 by ABL1 in response to oxidative stress. Post-translationally, ubiquitinated. Undergo monoubiquitination and multi- and/or polyubiquitination. Monoubiquitination of N-terminal lysines promotes integration in a ternary complex with UBXN6 and VCP which promotes oligomeric CAV1 targeting to lysosomes for degradation. Ubiquitinated by ZNRF1; leading to degradation and modulation of the TLR4-mediated immune response.

The protein localises to the golgi apparatus membrane. It is found in the cell membrane. Its subcellular location is the membrane. It localises to the caveola. The protein resides in the membrane raft. In terms of biological role, may act as a scaffolding protein within caveolar membranes. Forms a stable heterooligomeric complex with CAV2 that targets to lipid rafts and drives caveolae formation. Mediates the recruitment of CAVIN proteins (CAVIN1/2/3/4) to the caveolae. Interacts directly with G-protein alpha subunits and can functionally regulate their activity. Involved in the costimulatory signal essential for T-cell receptor (TCR)-mediated T-cell activation. Its binding to DPP4 induces T-cell proliferation and NF-kappa-B activation in a T-cell receptor/CD3-dependent manner. Recruits CTNNB1 to caveolar membranes and may regulate CTNNB1-mediated signaling through the Wnt pathway. Negatively regulates TGFB1-mediated activation of SMAD2/3 by mediating the internalization of TGFBR1 from membrane rafts leading to its subsequent degradation. Binds 20(S)-hydroxycholesterol (20(S)-OHC). The sequence is that of Caveolin-1 (CAV1) from Equus caballus (Horse).